A 235-amino-acid chain; its full sequence is Retron Ec48 transmembrane protein (235 aa).

2 consecutive transmembrane segments (helical) span residues 11-31 (IVGV…FETI) and 64-84 (AFGW…ALMT).

The protein localises to the cell inner membrane. Functionally, membrane component of antiviral defense system Retron Ec48, composed of a non-coding RNA (ncRNA), a reverse transcriptase (RT) and this membrane protein. Expression of this retron confers protection against bacteriophages lambda, T2, T4, T5 and T7. At multiplicity of infection (MOI) of 0.02 cultures grow normally when infected with lambda without collapsing, at MOI 2 cultures enter growth stasis. At MOI 3 cell membranes are permeabilized within 15 minutes of infection but do not lyse, suggesting the phage are not able to finish a replication cycle. Antiviral defense is suppressed by mutations that knockout the lambda gam expression or phage T7 gp5.9 expression; both viral genes inhibit host RecBCD. The Ec48 retron may sense the integrity of the RecBCD enzyme; when RecBCD is perturbed by viral proteins the Ec48 effector (the membrane protein) is activated, leading to abortive infection and bacterial growth arrest. This is Retron Ec48 transmembrane protein from Escherichia coli.